Consider the following 296-residue polypeptide: Isoprenyl transferase (296 aa).

Basic residues predominate over residues 1-11; it reads MATERNRRRKG. The tract at residues 1-29 is disordered; that stretch reads MATERNRRRKGSYPQLPPAPDDYPTFPDK. The active site involves Asp-76. Asp-76 contributes to the Mg(2+) binding site. Substrate-binding positions include 77–80, Trp-81, Arg-89, His-93, and 121–123; these read GNGR and STE. Asn-124 serves as the catalytic Proton acceptor. Substrate is bound by residues Trp-125, Arg-127, Arg-244, and 250–252; that span reads RAS. Mg(2+) is bound at residue Glu-263.

Belongs to the UPP synthase family. Homodimer. It depends on Mg(2+) as a cofactor.

Catalyzes the condensation of isopentenyl diphosphate (IPP) with allylic pyrophosphates generating different type of terpenoids. The protein is Isoprenyl transferase of Mycolicibacterium parafortuitum (Mycobacterium parafortuitum).